The primary structure comprises 259 residues: Protein odd-skipped-related 1 (259 aa).

C2H2-type zinc fingers lie at residues 168–190, 196–218, and 224–246; these read FVCK…ERTH, YTCD…RYIH, and FKCQ…KTLH.

This sequence belongs to the Odd C2H2-type zinc-finger protein family.

The protein localises to the nucleus. Functionally, transcriptional repressor. Required for pronephric kidney development. This chain is Protein odd-skipped-related 1, found in Xenopus tropicalis (Western clawed frog).